We begin with the raw amino-acid sequence, 256 residues long: Large ribosomal subunit protein bL21c (256 aa).

The N-terminal 55 residues, Met-1 to Ala-55, are a transit peptide targeting the chloroplast.

As to quaternary structure, component of the chloroplast large ribosomal subunit (LSU). Mature 70S chloroplast ribosomes of higher plants consist of a small (30S) and a large (50S) subunit. The 30S small subunit contains 1 molecule of ribosomal RNA (16S rRNA) and 24 different proteins. The 50S large subunit contains 3 rRNA molecules (23S, 5S and 4.5S rRNA) and 33 different proteins.

The protein localises to the plastid. The protein resides in the chloroplast. Its function is as follows. Component of the chloroplast ribosome (chloro-ribosome), a dedicated translation machinery responsible for the synthesis of chloroplast genome-encoded proteins, including proteins of the transcription and translation machinery and components of the photosynthetic apparatus. In Spinacia oleracea (Spinach), this protein is Large ribosomal subunit protein bL21c (RPL21).